The chain runs to 156 residues: Ribosome maturation factor RimP (156 aa).

Belongs to the RimP family.

The protein localises to the cytoplasm. Required for maturation of 30S ribosomal subunits. The sequence is that of Ribosome maturation factor RimP from Bacillus cereus (strain G9842).